A 610-amino-acid chain; its full sequence is Probable indole-3-acetic acid-amido synthetase GH3.1 (610 aa).

This sequence belongs to the IAA-amido conjugating enzyme family. Expressed in flowers.

Functionally, may catalyze the synthesis of indole-3-acetic acid (IAA)-amino acid conjugates, providing a mechanism for the plant to cope with the presence of excess auxin. The chain is Probable indole-3-acetic acid-amido synthetase GH3.1 (GH3.1) from Oryza sativa subsp. japonica (Rice).